The following is a 136-amino-acid chain: Small ribosomal subunit protein uS19 (136 aa).

The segment at 114–136 is disordered; the sequence is RSRVSHGSAGVGATRSSKFVPLK.

Belongs to the universal ribosomal protein uS19 family.

Its function is as follows. Protein S19 forms a complex with S13 that binds strongly to the 16S ribosomal RNA. The polypeptide is Small ribosomal subunit protein uS19 (Methanosarcina barkeri (strain Fusaro / DSM 804)).